The following is a 638-amino-acid chain: Intron-encoded RNA maturase bI4 (638 aa).

Residues 1 to 253 (MAFRKSNVYL…VFYSPNTLGQ (253 aa)) form a COB exons 1 to 4 encoded region. The segment at 253–638 (QNMALLLITY…LKFNEKWNNN (386 aa)) is COB intron 4 encoded.

This sequence in the C-terminal section; belongs to the LAGLIDADG endonuclease family. Forms a ternary complex with intron derived RNA and the imported mitochondrial leucyl-tRNA synthetase NAM2. The proteins do not interact directly with each other. The mature protein may arise from proteolytic cleavage of an in-frame translation of COB exons 1 to 4 plus intron 4, containing the bI4 open reading frame. Cleavage would take place close to the Met-385 resulting in an active maturase of about 30 kDa.

It localises to the mitochondrion. Its function is as follows. Mitochondrial mRNA maturase required for splicing of intron 4 of the cytochrome b (COB) gene, containing its own coding sequence, and intron 4 in COX1, coding for the related homing endonuclease aI4. In vivo splicing requires in addition the imported mitochondrial leucyl-tRNA synthetase NAM2. Both proteins seem to stimulate the intrinsic ribozyme activity of intron bI4 through binding to and stabilizing specific secondary and tertiary structure elements in the RNA. The polypeptide is Intron-encoded RNA maturase bI4 (BI4) (Saccharomyces cerevisiae (strain ATCC 204508 / S288c) (Baker's yeast)).